We begin with the raw amino-acid sequence, 263 residues long: Rano class II histocompatibility antigen, B-1 beta chain (263 aa).

A signal peptide spans 1 to 27 (MALQTPSFLLPAAVVVLMVLSSPGTEG). A beta-1 region spans residues 28–120 (RDSPRDFVYQ…SEVRTSLRRL (93 aa)). The Extracellular portion of the chain corresponds to 28-224 (RDSPRDFVYQ…RAQSESAQSK (197 aa)). 2 disulfide bridges follow: cysteine 42/cysteine 104 and cysteine 143/cysteine 199. Asparagine 46 carries N-linked (GlcNAc...) asparagine glycosylation. Positions 121 to 214 (EQPNVAISLS…SLESPVTVEW (94 aa)) are beta-2. Positions 123-211 (PNVAISLSRT…DHPSLESPVT (89 aa)) constitute an Ig-like C1-type domain. The interval 215 to 224 (RAQSESAQSK) is connecting peptide. The chain crosses the membrane as a helical span at residues 225–245 (MLSGIGGFVLGVIFLGLGLFI). Residues 246 to 263 (RHKRQKGPRGPPPAGLLQ) lie on the Cytoplasmic side of the membrane. Lysine 251 is covalently cross-linked (Glycyl lysine isopeptide (Lys-Gly) (interchain with G-Cter in ubiquitin)).

The protein belongs to the MHC class II family.

It localises to the membrane. Involved in the presentation of foreign antigens to the immune system. This is Rano class II histocompatibility antigen, B-1 beta chain (RT1-Bb) from Rattus norvegicus (Rat).